We begin with the raw amino-acid sequence, 421 residues long: Thymidine phosphorylase (421 aa).

It belongs to the thymidine/pyrimidine-nucleoside phosphorylase family. As to quaternary structure, homodimer.

The catalysed reaction is thymidine + phosphate = 2-deoxy-alpha-D-ribose 1-phosphate + thymine. Its function is as follows. The enzymes which catalyze the reversible phosphorolysis of pyrimidine nucleosides are involved in the degradation of these compounds and in their utilization as carbon and energy sources, or in the rescue of pyrimidine bases for nucleotide synthesis. This chain is Thymidine phosphorylase (deoA), found in Mycoplasma pneumoniae (strain ATCC 29342 / M129 / Subtype 1) (Mycoplasmoides pneumoniae).